A 154-amino-acid chain; its full sequence is Myoglobin (154 aa).

One can recognise a Globin domain in the interval 2-148 (GLSEGEWQLV…FRKDIAAKYK (147 aa)). At serine 4 the chain carries Phosphoserine. Histidine 65 serves as a coordination point for nitrite. Histidine 65 provides a ligand contact to O2. The residue at position 68 (threonine 68) is a Phosphothreonine. Histidine 94 is a binding site for heme b.

In terms of assembly, monomer.

Its subcellular location is the cytoplasm. The protein resides in the sarcoplasm. It catalyses the reaction Fe(III)-heme b-[protein] + nitric oxide + H2O = Fe(II)-heme b-[protein] + nitrite + 2 H(+). The catalysed reaction is H2O2 + AH2 = A + 2 H2O. In terms of biological role, monomeric heme protein which primary function is to store oxygen and facilitate its diffusion within muscle tissues. Reversibly binds oxygen through a pentacoordinated heme iron and enables its timely and efficient release as needed during periods of heightened demand. Depending on the oxidative conditions of tissues and cells, and in addition to its ability to bind oxygen, it also has a nitrite reductase activity whereby it regulates the production of bioactive nitric oxide. Under stress conditions, like hypoxia and anoxia, it also protects cells against reactive oxygen species thanks to its pseudoperoxidase activity. In Delphinapterus leucas (Beluga whale), this protein is Myoglobin (MB).